Here is a 317-residue protein sequence, read N- to C-terminus: 2-oxoglutarate and iron-dependent oxygenase domain-containing protein 3 (317 aa).

A disordered region spans residues 1–34 (MATRHRRRGGSAPSWAKPGKPGERPGGPKKSRGR). Residues 1–39 (MATRHRRRGGSAPSWAKPGKPGERPGGPKKSRGRTSWKS) are Cytoplasmic-facing. Residues 40–60 (LLIWGVFGVTLGLMAGYYLWG) traverse the membrane as a helical; Signal-anchor for type II membrane protein segment. Over 61–317 (ELITDDSVTE…EHAIGDPTWT (257 aa)) the chain is Lumenal. N-linked (GlcNAc...) asparagine glycosylation is found at Asn-195 and Asn-213. The Fe2OG dioxygenase domain maps to 205 to 307 (KPTFFSRMNS…AITISFTCNP (103 aa)). Fe cation is bound by residues His-228 and Asp-230. A glycan (N-linked (GlcNAc...) asparagine) is linked at Asn-265. Fe cation is bound at residue His-286. Residue Arg-296 is part of the active site. Position 296 (Arg-296) interacts with 2-oxoglutarate.

This sequence belongs to the OGFOD3 family. Requires Fe(2+) as cofactor. L-ascorbate is required as a cofactor.

Its subcellular location is the membrane. The chain is 2-oxoglutarate and iron-dependent oxygenase domain-containing protein 3 (ogfod3) from Xenopus tropicalis (Western clawed frog).